The sequence spans 206 residues: Glycerol-3-phosphate acyltransferase (206 aa).

The next 6 helical transmembrane spans lie at 4–24 (IIGILILGYLLGSIPFALLVG), 55–75 (IIVLIGDLGKGAVASLVPILL), 78–98 (ELHPLFAGLAAVVGHIYPVFA), 112–132 (MLLVTSPILFLVLLISFLTTL), 137–157 (MVSLSSIVSASIGIVAAITIG), and 158–178 (IVEQDWIVPTFFTILALFVIF).

The protein belongs to the PlsY family. As to quaternary structure, probably interacts with PlsX.

It localises to the cell membrane. It carries out the reaction an acyl phosphate + sn-glycerol 3-phosphate = a 1-acyl-sn-glycero-3-phosphate + phosphate. Its pathway is lipid metabolism; phospholipid metabolism. Its function is as follows. Catalyzes the transfer of an acyl group from acyl-phosphate (acyl-PO(4)) to glycerol-3-phosphate (G3P) to form lysophosphatidic acid (LPA). This enzyme utilizes acyl-phosphate as fatty acyl donor, but not acyl-CoA or acyl-ACP. The chain is Glycerol-3-phosphate acyltransferase from Exiguobacterium sibiricum (strain DSM 17290 / CCUG 55495 / CIP 109462 / JCM 13490 / 255-15).